The sequence spans 209 residues: MAVLLLHQFKALPADKQIDTCSFLDSVSHLPAFFDCLGSAIFSPIKADITGNITKIRSVYESNPTQFKTLQMILEGEKELYGPKWPKAGATLALMWLKRGLKFIQVLLQSISDGERDDQNPNLIKVNITKAYDIALKNYHGWLVQKFFQTALIAAPYKDDFLKALSKGQAVKEEECIEKIRKFLVNYTTTIEAIYIMYNKMNAELDYKA.

Tandem repeats lie at residues Ile-45–Lys-55 and Ile-56–Gln-66. A 2 X 12 AA approximate tandem repeats region spans residues Ile-45 to Gln-66. Position 48–55 (Asp-48–Lys-55) interacts with beta-D-galactosyl-(1-&gt;4)-beta-D-glucosyl-(1&lt;-&gt;1)-N-[(9Z)-octadecenoyl]-sphing-4-enine. Beta-D-galactosyl-(1-&gt;4)-beta-D-glucosyl-(1&lt;-&gt;1)-N-[(9Z)-octadecenoyl]-sphing-4-enine contacts are provided by His-140 and Tyr-207.

Belongs to the GLTP family.

It localises to the cytoplasm. Accelerates the intermembrane transfer of various glycolipids. Catalyzes the transfer of various glycosphingolipids between membranes but does not catalyze the transfer of phospholipids. May be involved in the intracellular translocation of glucosylceramides. In Xenopus laevis (African clawed frog), this protein is Glycolipid transfer protein B (gltp-b).